A 611-amino-acid chain; its full sequence is Chaperone protein HscA (611 aa).

The protein belongs to the heat shock protein 70 family.

Functionally, chaperone involved in the maturation of iron-sulfur cluster-containing proteins. Has a low intrinsic ATPase activity which is markedly stimulated by HscB. Involved in the maturation of IscU. This chain is Chaperone protein HscA, found in Buchnera aphidicola subsp. Acyrthosiphon pisum (strain 5A).